The sequence spans 86 residues: Centromere protein W (86 aa).

It belongs to the CENP-W/WIP1 family. Heterodimer with CENPT; this dimer coassembles with CENPS-CENPX heterodimers at centromeres to form the tetrameric CENP-T-W-S-X complex, which is a subcomplex of the large constitutive centromere-associated network (CCAN, also known as the interphase centromere complex or ICEN). Interacts with NPM1.

It is found in the nucleus. It localises to the chromosome. The protein localises to the centromere. Its subcellular location is the kinetochore. The protein resides in the nucleus matrix. It is found in the nucleolus. In terms of biological role, component of the CENPA-NAC (nucleosome-associated) complex, a complex that plays a central role in assembly of kinetochore proteins, mitotic progression and chromosome segregation. The CENPA-NAC complex recruits the CENPA-CAD (nucleosome distal) complex and may be involved in incorporation of newly synthesized CENPA into centromeres. Part of a nucleosome-associated complex that binds specifically to histone H3-containing nucleosomes at the centromere, as opposed to nucleosomes containing CENPA. Component of the heterotetrameric CENP-T-W-S-X complex that binds and supercoils DNA, and plays an important role in kinetochore assembly. CENPW has a fundamental role in kinetochore assembly and function. It is one of the inner kinetochore proteins, with most further proteins binding downstream. Required for normal chromosome organization and normal progress through mitosis. This Rattus norvegicus (Rat) protein is Centromere protein W (Cenpw).